Consider the following 342-residue polypeptide: N-acetyl-gamma-glutamyl-phosphate reductase (342 aa).

Cysteine 147 is an active-site residue.

Belongs to the NAGSA dehydrogenase family. Type 1 subfamily.

Its subcellular location is the cytoplasm. The catalysed reaction is N-acetyl-L-glutamate 5-semialdehyde + phosphate + NADP(+) = N-acetyl-L-glutamyl 5-phosphate + NADPH + H(+). Its pathway is amino-acid biosynthesis; L-arginine biosynthesis; N(2)-acetyl-L-ornithine from L-glutamate: step 3/4. Catalyzes the NADPH-dependent reduction of N-acetyl-5-glutamyl phosphate to yield N-acetyl-L-glutamate 5-semialdehyde. This Methanosphaera stadtmanae (strain ATCC 43021 / DSM 3091 / JCM 11832 / MCB-3) protein is N-acetyl-gamma-glutamyl-phosphate reductase.